A 952-amino-acid chain; its full sequence is UPF0182 protein SRU_2225 (952 aa).

7 helical membrane-spanning segments follow: residues 12 to 32, 52 to 72, 109 to 129, 168 to 188, 207 to 227, 247 to 267, and 277 to 297; these read ILLGIIGVVFTVLLVTPGLVV, AQVLLFVLVFLVAGLYFGGNF, LGYVVAGVLSLLFAAGFSGRW, AVVGLAFLGLLALVTGYVIAG, LGANLIFLLLGWAWGFYLDLY, VVIPALYVMVAATLVLAGLVG, and LLGIGGAGYLVLLVGGLVLAP. The disordered stretch occupies residues 917–952; sequence VPLPDTTGTVPPPTSSDTTGTMTAPTGDVSEVTGGS. The segment covering 931–940 has biased composition (polar residues); that stretch reads SSDTTGTMTA.

Belongs to the UPF0182 family.

The protein resides in the cell membrane. The sequence is that of UPF0182 protein SRU_2225 from Salinibacter ruber (strain DSM 13855 / M31).